Reading from the N-terminus, the 336-residue chain is Ketol-acid reductoisomerase (NADP(+)) 1 (336 aa).

The 180-residue stretch at 2-181 (AKVYYEKDVT…GATRAGVLET (180 aa)) folds into the KARI N-terminal Rossmann domain. NADP(+)-binding positions include 25 to 28 (YGSQ), Arg48, Ser52, and 82 to 85 (DELQ). His107 is an active-site residue. Gly133 lines the NADP(+) pocket. Residues 182 to 327 (TFKEETETDL…RKLREMMPFV (146 aa)) form the KARI C-terminal knotted domain. Mg(2+) contacts are provided by Asp190, Glu194, Glu226, and Glu230. Ser251 serves as a coordination point for substrate.

Belongs to the ketol-acid reductoisomerase family. Mg(2+) serves as cofactor.

It carries out the reaction (2R)-2,3-dihydroxy-3-methylbutanoate + NADP(+) = (2S)-2-acetolactate + NADPH + H(+). The catalysed reaction is (2R,3R)-2,3-dihydroxy-3-methylpentanoate + NADP(+) = (S)-2-ethyl-2-hydroxy-3-oxobutanoate + NADPH + H(+). Its pathway is amino-acid biosynthesis; L-isoleucine biosynthesis; L-isoleucine from 2-oxobutanoate: step 2/4. It functions in the pathway amino-acid biosynthesis; L-valine biosynthesis; L-valine from pyruvate: step 2/4. Functionally, involved in the biosynthesis of branched-chain amino acids (BCAA). Catalyzes an alkyl-migration followed by a ketol-acid reduction of (S)-2-acetolactate (S2AL) to yield (R)-2,3-dihydroxy-isovalerate. In the isomerase reaction, S2AL is rearranged via a Mg-dependent methyl migration to produce 3-hydroxy-3-methyl-2-ketobutyrate (HMKB). In the reductase reaction, this 2-ketoacid undergoes a metal-dependent reduction by NADPH to yield (R)-2,3-dihydroxy-isovalerate. This is Ketol-acid reductoisomerase (NADP(+)) 1 from Bacillus cereus (strain ATCC 14579 / DSM 31 / CCUG 7414 / JCM 2152 / NBRC 15305 / NCIMB 9373 / NCTC 2599 / NRRL B-3711).